We begin with the raw amino-acid sequence, 138 residues long: Large ribosomal subunit protein uL16 (138 aa).

The protein belongs to the universal ribosomal protein uL16 family. In terms of assembly, part of the 50S ribosomal subunit.

Binds 23S rRNA and is also seen to make contacts with the A and possibly P site tRNAs. The protein is Large ribosomal subunit protein uL16 of Mycoplasmoides gallisepticum (strain R(low / passage 15 / clone 2)) (Mycoplasma gallisepticum).